Here is a 395-residue protein sequence, read N- to C-terminus: RNA demethylase ALKBH5 (395 aa).

Disordered regions lie at residues 1-28 and 47-83; these read MAAA…AGSR and AAEP…EEEA. A2 carries the post-translational modification N-acetylalanine. Residue K58 forms a Glycyl lysine isopeptide (Lys-Gly) (interchain with G-Cter in ubiquitin) linkage. Residues 60 to 83 are compositionally biased toward basic and acidic residues; the sequence is KYQEDSDPERSDYEEHQLQKEEEA. A phosphoserine mark is found at S65 and S70. Residues 68-117 are a coiled coil; it reads ERSDYEEHQLQKEEEARKVKSGIRQIRLFSQDECSKIEARIDEVVSRAEK. The residue at position 72 (Y72) is a Phosphotyrosine. K87 is covalently cross-linked (Glycyl lysine isopeptide (Lys-Gly) (interchain with G-Cter in SUMO1)). S88 carries the phosphoserine modification. N6-acetyllysine is present on K133. Y140 is an active-site residue. Residues N194, Y196, and H205 each contribute to the 2-oxoglutarate site. A disulfide bond links C231 and C268. Residue K236 is modified to N6-acetyllysine. The 2-oxoglutarate site is built by H267 and R278. A disordered region spans residues 294–395; it reads ETKSLSSSTL…PTRKVKMRRH (102 aa). Positions 296 to 306 are enriched in low complexity; it reads KSLSSSTLPPS. K322 is covalently cross-linked (Glycyl lysine isopeptide (Lys-Gly) (interchain with G-Cter in SUMO1)). A Phosphoserine modification is found at S326. K329 is covalently cross-linked (Glycyl lysine isopeptide (Lys-Gly) (interchain with G-Cter in SUMO2)). Residues 329–350 are compositionally biased toward basic and acidic residues; it reads KADPDAAHRPRILEMDKEENRR. R360 bears the Omega-N-methylarginine mark. Phosphoserine occurs at positions 362, 372, 375, and 385.

Belongs to the alkB family. In terms of assembly, monomer. Interacts with RBM33; promoting desumoylation by SENP1 and recruitment to N(6)-methyladenosine-containing mRNAs. Interacts (when acetylated by KAT8) with PSPC1; interaction facilitates recognition of N(6)-methyladenosine (m6A) mRNA. It depends on Fe(2+) as a cofactor. In terms of processing, phosphorylated at Ser-88 and Ser-326 in response to reactive oxygen species (ROS), promoting sumoylation and inactivation. Acetylated by KAT8 at Lys-236, promoting interaction with PSPC1, thereby facilitating recognition of N(6)-methyladenosine (m6A) mRNA by ALKBH5. Deacetylated at Lys-236 by HDAC7. Post-translationally, sumoylated at Lys-87 and Lys-322 by PIAS4 following phosphorylation at Ser-88 and Ser-326 in response to reactive oxygen species (ROS), inhibiting the RNA demethylase activity. Desumoylated by SENP1; relieving RNA demethylase inhibition, leading to N(6)-methyladenosine-containing mRNAs demethylation. In terms of processing, ubiquitinated at Lys-58 via 'Lys-48'-linked polyubiquitin chain, leading to its degradation by the proteasome. Deubiquitinated at Lys-58 by USP9X, promoting its stabilizazion.

It is found in the nucleus speckle. It catalyses the reaction an N(6)-methyladenosine in mRNA + 2-oxoglutarate + O2 = an adenosine in mRNA + formaldehyde + succinate + CO2. Its activity is regulated as follows. RNA demethylase activity is inhibited following sumoylation. Inhibition is relieved following desumoylation. In terms of biological role, dioxygenase that specifically demethylates N(6)-methyladenosine (m6A) RNA, the most prevalent internal modification of messenger RNA (mRNA) in higher eukaryotes. Demethylates RNA by oxidative demethylation, which requires molecular oxygen, alpha-ketoglutarate and iron. Demethylation of m6A mRNA affects mRNA processing, translation and export. Can also demethylate N(6)-methyladenosine in single-stranded DNA (in vitro). Required for the late meiotic and haploid phases of spermatogenesis by mediating m6A demethylation in spermatocytes and round spermatids: m6A demethylation of target transcripts is required for correct splicing and the production of longer 3'-UTR mRNAs in male germ cells. Involved in paraspeckle assembly, a nuclear membraneless organelle, by undergoing liquid-liquid phase separation. Paraspeckle assembly is coupled with m6A demethylation of RNAs, such as NEAT1 non-coding RNA. Also acts as a negative regulator of T-cell development: inhibits gamma-delta T-cell proliferation via demethylation of JAG1 and NOTCH2 transcripts. Inhibits regulatory T-cell (Treg) recruitment by mediating demethylation and destabilization of CCL28 mRNAs. The sequence is that of RNA demethylase ALKBH5 (Alkbh5) from Rattus norvegicus (Rat).